The chain runs to 190 residues: GTP cyclohydrolase 1 (190 aa).

Residues cysteine 80, histidine 83, and cysteine 151 each contribute to the Zn(2+) site.

This sequence belongs to the GTP cyclohydrolase I family. In terms of assembly, toroid-shaped homodecamer, composed of two pentamers of five dimers.

It carries out the reaction GTP + H2O = 7,8-dihydroneopterin 3'-triphosphate + formate + H(+). The protein operates within cofactor biosynthesis; 7,8-dihydroneopterin triphosphate biosynthesis; 7,8-dihydroneopterin triphosphate from GTP: step 1/1. In Rickettsia akari (strain Hartford), this protein is GTP cyclohydrolase 1.